A 287-amino-acid chain; its full sequence is 4,4'-diapophytoene synthase (287 aa).

Residues 18-21 (HSKS), Y41, and R45 each bind (2E,6E)-farnesyl diphosphate. The Mg(2+) site is built by D48 and D52. Position 165 (Q165) interacts with (2E,6E)-farnesyl diphosphate. N168 lines the Mg(2+) pocket. R171 contacts (2E,6E)-farnesyl diphosphate. D172 serves as a coordination point for Mg(2+). Y248 contacts (2E,6E)-farnesyl diphosphate.

It belongs to the phytoene/squalene synthase family. CrtM subfamily. It depends on Mg(2+) as a cofactor.

The catalysed reaction is 2 (2E,6E)-farnesyl diphosphate = 15-cis-4,4'-diapophytoene + 2 diphosphate. The protein operates within carotenoid biosynthesis; staphyloxanthin biosynthesis; staphyloxanthin from farnesyl diphosphate: step 1/5. Involved in the biosynthesis of the yellow-orange carotenoid staphyloxanthin, which plays a role in the virulence via its protective function against oxidative stress. Catalyzes the head-to-head condensation of two molecules of farnesyl diphosphate (FPP) into the colorless C(30) carotenoid 4,4'-diapophytoene (dehydrosqualene). This chain is 4,4'-diapophytoene synthase, found in Staphylococcus aureus (strain NCTC 8325 / PS 47).